The primary structure comprises 150 residues: Transcriptional repressor NrdR (150 aa).

A zinc finger lies at 3–34 (CPYCQFEDTRVIDSRLASEGEQVRRRRECNRC). In terms of domain architecture, ATP-cone spans 49-139 (PRIVKRDGTR…VYRSFEDVSA (91 aa)).

This sequence belongs to the NrdR family. It depends on Zn(2+) as a cofactor.

Functionally, negatively regulates transcription of bacterial ribonucleotide reductase nrd genes and operons by binding to NrdR-boxes. This chain is Transcriptional repressor NrdR, found in Alkalilimnicola ehrlichii (strain ATCC BAA-1101 / DSM 17681 / MLHE-1).